Here is a 229-residue protein sequence, read N- to C-terminus: Lantibiotic transport ATP-binding protein SrtF (229 aa).

One can recognise an ABC transporter domain in the interval L2–F225. An ATP-binding site is contributed by G34–S41.

This sequence belongs to the ABC transporter superfamily.

Implicated in the export process of the lantibiotic SrtA. The sequence is that of Lantibiotic transport ATP-binding protein SrtF (srtF) from Streptococcus pyogenes serotype M1.